We begin with the raw amino-acid sequence, 738 residues long: Flowering time control protein FCA (738 aa).

The segment at 1 to 118 (MHRGGDRSTD…RGDHSDHDNR (118 aa)) is disordered. Gly residues-rich tracts occupy residues 52 to 70 (RGGG…GGGR) and 81 to 98 (SGGG…GEPG). Residues 109–118 (RGDHSDHDNR) show a composition bias toward basic and acidic residues. 2 RRM domains span residues 122 to 203 (VKLF…YADG) and 213 to 293 (HKLF…FADP). 2 disordered regions span residues 292 to 414 (DPKR…GHHL) and 566 to 594 (QQSN…AIIP). The segment covering 301-311 (SRGGPAFGGPG) has biased composition (gly residues). Over residues 342 to 358 (HPSSPRSAPHQFNNFGS) the composition is skewed to polar residues. Residues 368-377 (TVTSTTDTAT) show a composition bias toward low complexity. Polar residues-rich tracts occupy residues 383-401 (FSGN…SSHM) and 575-594 (PTQG…AIIP). Residues 609–642 (VPLTCNWTEHTSPEGFKYYYNSITRESKWDKPEE) form the WW domain. The interval 670 to 738 (MQQLQSPPQA…QSAQERAWKS (69 aa)) is disordered. Residues 683-706 (PAMQPVQQIPQAQQGQQQMQMKQQ) are compositionally biased toward low complexity. Residues 723-732 (RIQQGIQSAQ) show a composition bias toward polar residues.

In terms of assembly, interacts with FY. Binds to SF1, FIK, RPRD1B, Os09g0509000/LOC_Os09g33480 and MADS8. In terms of tissue distribution, mostly expressed in young flowers (panicles) and stems, and also present in young seedlings leaves and roots.

The protein resides in the nucleus. Its function is as follows. Plays a major role in the promotion of the transition of the vegetative meristem to reproductive development. Required for RNA-mediated chromatin silencing of a range of loci in the genome. Cotranscriptionally recognizes aberrant RNA and marks it for silencing. Controls alternative cleavage and polyadenylation on pre-mRNAs and antisense RNAs. Regulates flowering time, seed size and cell volume, probably via the modulation of cell size. This Oryza sativa subsp. japonica (Rice) protein is Flowering time control protein FCA.